Consider the following 177-residue polypeptide: Sec-independent protein translocase protein TatB (177 aa).

Residues 1 to 21 form a helical membrane-spanning segment; that stretch reads MFDFAWSEIAVIGVVALVVIG. The span at 136-146 shows a compositional bias: basic and acidic residues; the sequence is REKTVSSETAR. The interval 136-177 is disordered; the sequence is REKTVSSETARRAATAPAFIPPGEAFRSARRAPAFIPPADQG.

It belongs to the TatB family. In terms of assembly, the Tat system comprises two distinct complexes: a TatABC complex, containing multiple copies of TatA, TatB and TatC subunits, and a separate TatA complex, containing only TatA subunits. Substrates initially bind to the TatABC complex, which probably triggers association of the separate TatA complex to form the active translocon.

Its subcellular location is the cell inner membrane. Its function is as follows. Part of the twin-arginine translocation (Tat) system that transports large folded proteins containing a characteristic twin-arginine motif in their signal peptide across membranes. Together with TatC, TatB is part of a receptor directly interacting with Tat signal peptides. TatB may form an oligomeric binding site that transiently accommodates folded Tat precursor proteins before their translocation. In Granulibacter bethesdensis (strain ATCC BAA-1260 / CGDNIH1), this protein is Sec-independent protein translocase protein TatB.